The following is a 136-amino-acid chain: Large ribosomal subunit protein uL16 (136 aa).

This sequence belongs to the universal ribosomal protein uL16 family. In terms of assembly, part of the 50S ribosomal subunit.

In terms of biological role, binds 23S rRNA and is also seen to make contacts with the A and possibly P site tRNAs. The protein is Large ribosomal subunit protein uL16 of Sodalis glossinidius (strain morsitans).